The following is a 446-amino-acid chain: Putative zinc metalloprotease NMA0084 (446 aa).

H18 is a binding site for Zn(2+). E19 is an active-site residue. A Zn(2+)-binding site is contributed by H22. 3 consecutive transmembrane segments (helical) span residues 93–115, 376–398, and 419–438; these read IAIV…GLSF, FLAL…LDGG, and NIGL…VAFF. A PDZ domain is found at 100–181; it reads PLTNLALAVL…KVAVGVQTAS (82 aa).

It belongs to the peptidase M50B family. The cofactor is Zn(2+).

The protein resides in the cell inner membrane. This chain is Putative zinc metalloprotease NMA0084, found in Neisseria meningitidis serogroup A / serotype 4A (strain DSM 15465 / Z2491).